Consider the following 213-residue polypeptide: Na(+)-translocating NADH-quinone reductase subunit D (213 aa).

7 helical membrane-spanning segments follow: residues 21–41 (ILIA…VQTA), 42–62 (ITMG…VSLL), 77–97 (IIIS…FFDI), 101–121 (LSVF…SESL), 131–151 (FLDG…IGVI), 153–173 (ELFG…VYAS), and 183–203 (LSLM…IWLV).

It belongs to the NqrDE/RnfAE family. As to quaternary structure, composed of six subunits; NqrA, NqrB, NqrC, NqrD, NqrE and NqrF.

The protein localises to the cell inner membrane. The catalysed reaction is a ubiquinone + n Na(+)(in) + NADH + H(+) = a ubiquinol + n Na(+)(out) + NAD(+). In terms of biological role, NQR complex catalyzes the reduction of ubiquinone-1 to ubiquinol by two successive reactions, coupled with the transport of Na(+) ions from the cytoplasm to the periplasm. NqrA to NqrE are probably involved in the second step, the conversion of ubisemiquinone to ubiquinol. The sequence is that of Na(+)-translocating NADH-quinone reductase subunit D from Chlamydia pneumoniae (Chlamydophila pneumoniae).